A 362-amino-acid polypeptide reads, in one-letter code: Protein RecA (362 aa).

Residue 77–84 participates in ATP binding; the sequence is GPESSGKT.

The protein belongs to the RecA family.

Its subcellular location is the cytoplasm. Can catalyze the hydrolysis of ATP in the presence of single-stranded DNA, the ATP-dependent uptake of single-stranded DNA by duplex DNA, and the ATP-dependent hybridization of homologous single-stranded DNAs. It interacts with LexA causing its activation and leading to its autocatalytic cleavage. The sequence is that of Protein RecA from Rhizobium etli (strain CIAT 652).